A 247-amino-acid polypeptide reads, in one-letter code: Small ribosomal subunit protein uS2 (247 aa).

Belongs to the universal ribosomal protein uS2 family.

This Ectopseudomonas mendocina (strain ymp) (Pseudomonas mendocina) protein is Small ribosomal subunit protein uS2.